The following is a 389-amino-acid chain: PqqA peptide cyclase (389 aa).

The region spanning 19 to 235 (VGLPLWLLAE…NEYRVRLEAE (217 aa)) is the Radical SAM core domain. [4Fe-4S] cluster-binding residues include cysteine 33, cysteine 37, and cysteine 40.

It belongs to the radical SAM superfamily. PqqE family. Interacts with PqqD. The interaction is necessary for activity of PqqE. [4Fe-4S] cluster serves as cofactor.

The enzyme catalyses [PQQ precursor protein] + S-adenosyl-L-methionine = E-Y cross-linked-[PQQ precursor protein] + 5'-deoxyadenosine + L-methionine + H(+). It functions in the pathway cofactor biosynthesis; pyrroloquinoline quinone biosynthesis. In terms of biological role, catalyzes the cross-linking of a glutamate residue and a tyrosine residue in the PqqA protein as part of the biosynthesis of pyrroloquinoline quinone (PQQ). The chain is PqqA peptide cyclase from Pseudomonas savastanoi pv. phaseolicola (strain 1448A / Race 6) (Pseudomonas syringae pv. phaseolicola (strain 1448A / Race 6)).